Here is a 135-residue protein sequence, read N- to C-terminus: Hemoglobin subunit beta-2 (135 aa).

The 134-residue stretch at 2–135 (HWTAEEKALV…VVDALSKGYH (134 aa)) folds into the Globin domain. Residues H57 and H81 each coordinate heme b.

It belongs to the globin family. In terms of assembly, hb 2 is a heterotetramer of two alpha and two beta-2 chains. Red blood cells (at protein level).

In terms of biological role, involved in oxygen transport from gills to the various peripheral tissues. The sequence is that of Hemoglobin subunit beta-2 from Somniosus microcephalus (Greenland sleeper shark).